The chain runs to 156 residues: Ribosome maturation factor RimP (156 aa).

Belongs to the RimP family.

The protein localises to the cytoplasm. In terms of biological role, required for maturation of 30S ribosomal subunits. This chain is Ribosome maturation factor RimP, found in Microcystis aeruginosa (strain NIES-843 / IAM M-2473).